Reading from the N-terminus, the 211-residue chain is Outer-membrane lipoprotein carrier protein (211 aa).

Positions 1–24 (MNTIKILIGLLGIFLFSLSGIVSA) are cleaved as a signal peptide.

It belongs to the LolA family. Monomer.

The protein resides in the periplasm. Participates in the translocation of lipoproteins from the inner membrane to the outer membrane. Only forms a complex with a lipoprotein if the residue after the N-terminal Cys is not an aspartate (The Asp acts as a targeting signal to indicate that the lipoprotein should stay in the inner membrane). This Coxiella burnetii (strain CbuK_Q154) (Coxiella burnetii (strain Q154)) protein is Outer-membrane lipoprotein carrier protein.